A 129-amino-acid polypeptide reads, in one-letter code: L5 homolog (129 aa).

The helical; Signal-anchor for type III membrane protein transmembrane segment at 27–47 (YFYILVFEVIVALIILNFFFK) threads the bilayer. A disulfide bridge links Cys-76 with Cys-106.

The protein belongs to the chordopoxvirinae L5 family. In terms of assembly, part of a stable entry-fusion complex (EFC) which is at least composed of proteins A16, A21, A28, G3, G9, H2, J5, and L5. Formation of the viral membrane is necessary for the assembly of the complex. Interacts with G3. Post-translationally, most cysteines are linked by disulfide bonds. They are created by the viral disulfide bond formation pathway, a poxvirus-specific redox pathway that operates on the cytoplasmic side of the MV membranes.

Its subcellular location is the virion membrane. In terms of biological role, envelope protein part of the entry-fusion complex responsible for the virus membrane fusion with host cell membrane during virus entry. Also plays a role in cell-cell fusion (syncytium formation). The polypeptide is L5 homolog (Fowlpox virus (strain NVSL) (FPV)).